The sequence spans 74 residues: Translation initiation factor IF-1 (74 aa).

Residues 1 to 73 enclose the S1-like domain; that stretch reads MSNKEDIIKM…TKGRIVYRKK (73 aa).

It belongs to the IF-1 family. Component of the 30S ribosomal translation pre-initiation complex which assembles on the 30S ribosome in the order IF-2 and IF-3, IF-1 and N-formylmethionyl-tRNA(fMet); mRNA recruitment can occur at any time during PIC assembly.

Its subcellular location is the cytoplasm. Its function is as follows. One of the essential components for the initiation of protein synthesis. Stabilizes the binding of IF-2 and IF-3 on the 30S subunit to which N-formylmethionyl-tRNA(fMet) subsequently binds. Helps modulate mRNA selection, yielding the 30S pre-initiation complex (PIC). Upon addition of the 50S ribosomal subunit IF-1, IF-2 and IF-3 are released leaving the mature 70S translation initiation complex. This is Translation initiation factor IF-1 from Thermosipho melanesiensis (strain DSM 12029 / CIP 104789 / BI429).